We begin with the raw amino-acid sequence, 544 residues long: Chaperonin GroEL (544 aa).

ATP is bound by residues 29–32, 86–90, G413, 476–478, and D492; these read TLGP, DGTTT, and NAA. The tract at residues 522 to 544 is disordered; that stretch reads PDPNANNNAAAGANPAAGMGGMM. The segment covering 524-538 has biased composition (low complexity); the sequence is PNANNNAAAGANPAA.

The protein belongs to the chaperonin (HSP60) family. Forms a cylinder of 14 subunits composed of two heptameric rings stacked back-to-back. Interacts with the co-chaperonin GroES.

Its subcellular location is the cytoplasm. It catalyses the reaction ATP + H2O + a folded polypeptide = ADP + phosphate + an unfolded polypeptide.. Its function is as follows. Together with its co-chaperonin GroES, plays an essential role in assisting protein folding. The GroEL-GroES system forms a nano-cage that allows encapsulation of the non-native substrate proteins and provides a physical environment optimized to promote and accelerate protein folding. In Lacticaseibacillus casei (strain BL23) (Lactobacillus casei), this protein is Chaperonin GroEL.